Here is a 100-residue protein sequence, read N- to C-terminus: Large ribosomal subunit protein uL23 (100 aa).

The protein belongs to the universal ribosomal protein uL23 family. As to quaternary structure, part of the 50S ribosomal subunit. Contacts protein L29, and trigger factor when it is bound to the ribosome.

Its function is as follows. One of the early assembly proteins it binds 23S rRNA. One of the proteins that surrounds the polypeptide exit tunnel on the outside of the ribosome. Forms the main docking site for trigger factor binding to the ribosome. This chain is Large ribosomal subunit protein uL23, found in Corynebacterium aurimucosum (strain ATCC 700975 / DSM 44827 / CIP 107346 / CN-1) (Corynebacterium nigricans).